The chain runs to 187 residues: dCTP deaminase (187 aa).

DCTP-binding positions include 110 to 115, 134 to 136, Gln155, Tyr169, and Gln179; these read KSTYAR and TLE. The active-site Proton donor/acceptor is the Glu136.

The protein belongs to the dCTP deaminase family. In terms of assembly, homotrimer.

It carries out the reaction dCTP + H2O + H(+) = dUTP + NH4(+). Its pathway is pyrimidine metabolism; dUMP biosynthesis; dUMP from dCTP (dUTP route): step 1/2. Catalyzes the deamination of dCTP to dUTP. The chain is dCTP deaminase from Bordetella petrii (strain ATCC BAA-461 / DSM 12804 / CCUG 43448).